The chain runs to 126 residues: Protein LiaI (126 aa).

2 consecutive transmembrane segments (helical) span residues 11-31 (FLLIVFGISVFFGGGSFGFII) and 56-76 (IIVGGIGAIMLICSLPFVVGI).

It is found in the cell membrane. The polypeptide is Protein LiaI (liaI) (Bacillus subtilis (strain 168)).